We begin with the raw amino-acid sequence, 670 residues long: DNA ligase (670 aa).

NAD(+)-binding positions include 32 to 36, 81 to 82, and E113; these read DAEYD and SL. K115 functions as the N6-AMP-lysine intermediate in the catalytic mechanism. NAD(+) contacts are provided by R136, E173, K290, and K314. C408, C411, C426, and C432 together coordinate Zn(2+). The region spanning 592-670 is the BRCT domain; sequence EIDSPFAGKT…EAEMIRLLGE (79 aa).

It belongs to the NAD-dependent DNA ligase family. LigA subfamily. Requires Mg(2+) as cofactor. It depends on Mn(2+) as a cofactor.

It catalyses the reaction NAD(+) + (deoxyribonucleotide)n-3'-hydroxyl + 5'-phospho-(deoxyribonucleotide)m = (deoxyribonucleotide)n+m + AMP + beta-nicotinamide D-nucleotide.. Its function is as follows. DNA ligase that catalyzes the formation of phosphodiester linkages between 5'-phosphoryl and 3'-hydroxyl groups in double-stranded DNA using NAD as a coenzyme and as the energy source for the reaction. It is essential for DNA replication and repair of damaged DNA. This is DNA ligase from Yersinia pseudotuberculosis serotype IB (strain PB1/+).